We begin with the raw amino-acid sequence, 338 residues long: MKNSADITVLGAGSYGTALAISLASNGHKTLLWGHDPVHMQTLAQDKCNQAFLPGIAFPDCLQIEADLAKALAASNNVLVVVPSHVFGTVLEQAKPLLRSDARIVWATKGLEPETGRLLQDVARDVLGEQYPLAVLSGPTFAKELAMGLPTAISVAGTCPTFTNDLVELLHSPKRLRVYANDDFTGLQLGGAVKNVIAIGAGMSDGIGFGANARTALITRGLVELTRLGEALGANAATFMGMAGLGDLVLTCTDNQSRNRRFGLALGKGCDVMTAQAEIGQVVEGYRNTKEVFTLAKRLGVEMPITEQIYQVLYQGKSPVDAAKELLSREKKSETPAQ.

4 residues coordinate NADPH: Ser-14, Tyr-15, His-35, and Lys-109. Positions 109, 138, and 140 each coordinate sn-glycerol 3-phosphate. NADPH is bound at residue Ala-142. Lys-194, Asp-247, Ser-257, Arg-258, and Asn-259 together coordinate sn-glycerol 3-phosphate. Catalysis depends on Lys-194, which acts as the Proton acceptor. Residue Arg-258 participates in NADPH binding. NADPH is bound by residues Val-282 and Glu-284.

Belongs to the NAD-dependent glycerol-3-phosphate dehydrogenase family.

Its subcellular location is the cytoplasm. It carries out the reaction sn-glycerol 3-phosphate + NAD(+) = dihydroxyacetone phosphate + NADH + H(+). The enzyme catalyses sn-glycerol 3-phosphate + NADP(+) = dihydroxyacetone phosphate + NADPH + H(+). Its pathway is membrane lipid metabolism; glycerophospholipid metabolism. Its function is as follows. Catalyzes the reduction of the glycolytic intermediate dihydroxyacetone phosphate (DHAP) to sn-glycerol 3-phosphate (G3P), the key precursor for phospholipid synthesis. The protein is Glycerol-3-phosphate dehydrogenase [NAD(P)+] of Shewanella baltica (strain OS185).